The sequence spans 490 residues: Cytochrome P450 2C39 (490 aa).

An N-terminal signal peptide occupies residues Met1–Gly25. Cys435 lines the heme pocket.

Belongs to the cytochrome P450 family. Requires heme as cofactor. Liver.

It localises to the endoplasmic reticulum membrane. It is found in the microsome membrane. The enzyme catalyses an organic molecule + reduced [NADPH--hemoprotein reductase] + O2 = an alcohol + oxidized [NADPH--hemoprotein reductase] + H2O + H(+). It carries out the reaction (5Z,8Z,11Z,14Z)-eicosatetraenoate + reduced [NADPH--hemoprotein reductase] + O2 = 11,12-epoxy-(5Z,8Z,14Z)-eicosatrienoate + oxidized [NADPH--hemoprotein reductase] + H2O + H(+). The catalysed reaction is (5Z,8Z,11Z,14Z)-eicosatetraenoate + reduced [NADPH--hemoprotein reductase] + O2 = 14,15-epoxy-(5Z,8Z,11Z)-eicosatrienoate + oxidized [NADPH--hemoprotein reductase] + H2O + H(+). It participates in lipid metabolism; arachidonate metabolism. Functionally, a cytochrome P450 monooxygenase that primarily catalyzes the epoxidation of 11,12 and 14,15 double bonds of (5Z,8Z,11Z,14Z)-eicosatetraenoic acid (arachidonate) forming 11,12- and 14,15-epoxyeicosatrienoic acids (11,12- and 14,15-EET) regioisomers. Mechanistically, uses molecular oxygen inserting one oxygen atom into a substrate, and reducing the second into a water molecule, with two electrons provided by NADPH via cytochrome P450 reductase (CPR; NADPH--hemoprotein reductase). The polypeptide is Cytochrome P450 2C39 (Mus musculus (Mouse)).